Reading from the N-terminus, the 428-residue chain is Gamma-glutamyl phosphate reductase (428 aa).

Belongs to the gamma-glutamyl phosphate reductase family.

It is found in the cytoplasm. It carries out the reaction L-glutamate 5-semialdehyde + phosphate + NADP(+) = L-glutamyl 5-phosphate + NADPH + H(+). The protein operates within amino-acid biosynthesis; L-proline biosynthesis; L-glutamate 5-semialdehyde from L-glutamate: step 2/2. Its function is as follows. Catalyzes the NADPH-dependent reduction of L-glutamate 5-phosphate into L-glutamate 5-semialdehyde and phosphate. The product spontaneously undergoes cyclization to form 1-pyrroline-5-carboxylate. The protein is Gamma-glutamyl phosphate reductase of Anaeromyxobacter sp. (strain Fw109-5).